Consider the following 429-residue polypeptide: UDP-N-acetylglucosamine 1-carboxyvinyltransferase (429 aa).

22–23 serves as a coordination point for phosphoenolpyruvate; it reads KN. A UDP-N-acetyl-alpha-D-glucosamine-binding site is contributed by arginine 102. Catalysis depends on cysteine 126, which acts as the Proton donor. Residue cysteine 126 is modified to 2-(S-cysteinyl)pyruvic acid O-phosphothioketal. UDP-N-acetyl-alpha-D-glucosamine-binding positions include 131–135, aspartate 316, and isoleucine 338; that span reads RPVDL.

This sequence belongs to the EPSP synthase family. MurA subfamily.

It is found in the cytoplasm. It catalyses the reaction phosphoenolpyruvate + UDP-N-acetyl-alpha-D-glucosamine = UDP-N-acetyl-3-O-(1-carboxyvinyl)-alpha-D-glucosamine + phosphate. Its pathway is cell wall biogenesis; peptidoglycan biosynthesis. Its function is as follows. Cell wall formation. Adds enolpyruvyl to UDP-N-acetylglucosamine. The sequence is that of UDP-N-acetylglucosamine 1-carboxyvinyltransferase from Rhodopseudomonas palustris (strain BisA53).